The primary structure comprises 1238 residues: Lysine-specific demethylase JMJ703 (1238 aa).

Positions Glu-56 to Cys-79 are disordered. A compositionally biased stretch (polar residues) spans Ala-62–Cys-79. One can recognise a JmjN domain in the interval Ala-154–Pro-195. The interval Lys-215 to Pro-266 is disordered. Positions Asn-221–Lys-238 are enriched in basic residues. The span at Asn-245–Pro-259 shows a compositional bias: polar residues. A JmjC domain is found at Lys-348–Arg-514. The Fe cation site is built by His-394, Glu-396, and His-482. 4 disordered regions span residues Gly-699–Glu-725, Tyr-777–Ser-798, Thr-834–Glu-863, and Ala-910–Thr-978. Residues Ser-706–Ser-719 are compositionally biased toward low complexity. Residues Ala-910–Gln-923 show a composition bias toward polar residues. The segment covering Ser-924–Ala-936 has biased composition (low complexity). Residues Ser-964 to Thr-978 are compositionally biased toward polar residues. One can recognise an FYR N-terminal domain in the interval Val-1019–Ala-1077. The FYR C-terminal domain maps to Met-1079 to Arg-1169.

Fe(2+) serves as cofactor. Expressed in roots, leaf sheaths, stems and panicles.

It is found in the nucleus. The catalysed reaction is N(6),N(6),N(6)-trimethyl-L-lysyl(4)-[histone H3] + 3 2-oxoglutarate + 3 O2 = L-lysyl(4)-[histone H3] + 3 formaldehyde + 3 succinate + 3 CO2. Its function is as follows. Histone demethylase that demethylates 'Lys-4' (H3K4me) of histone H3 with a specific activity for H3K4me3, H3K4me2 and H3K4me1. No activity on H3K9me3/2/1, H3K27me3/2/1 and H3K36me3/2/1. Involved in the control of stem elongation by regulating methylation states of H3K4me3 on cytokinin oxidase (CKX) gene family, which may cause increased expression of CKX genes and reduced cytokinin levels. Prevents ectopic retrotransposition by regulating the levels of H3K4me3 in two non-LTR retrotransposons KARMA and LINE-1 (L1) and reinforcing their repressed states. The chain is Lysine-specific demethylase JMJ703 (JMJ703) from Oryza sativa subsp. japonica (Rice).